The primary structure comprises 500 residues: Aspartyl/glutamyl-tRNA(Asn/Gln) amidotransferase subunit B (500 aa).

It belongs to the GatB/GatE family. GatB subfamily. As to quaternary structure, heterotrimer of A, B and C subunits.

It carries out the reaction L-glutamyl-tRNA(Gln) + L-glutamine + ATP + H2O = L-glutaminyl-tRNA(Gln) + L-glutamate + ADP + phosphate + H(+). The enzyme catalyses L-aspartyl-tRNA(Asn) + L-glutamine + ATP + H2O = L-asparaginyl-tRNA(Asn) + L-glutamate + ADP + phosphate + 2 H(+). Functionally, allows the formation of correctly charged Asn-tRNA(Asn) or Gln-tRNA(Gln) through the transamidation of misacylated Asp-tRNA(Asn) or Glu-tRNA(Gln) in organisms which lack either or both of asparaginyl-tRNA or glutaminyl-tRNA synthetases. The reaction takes place in the presence of glutamine and ATP through an activated phospho-Asp-tRNA(Asn) or phospho-Glu-tRNA(Gln). This chain is Aspartyl/glutamyl-tRNA(Asn/Gln) amidotransferase subunit B, found in Clavibacter sepedonicus (Clavibacter michiganensis subsp. sepedonicus).